Reading from the N-terminus, the 1426-residue chain is ABC transporter G family member 31 (1426 aa).

An ABC transporter 1 domain is found at 142 to 415 (LRHLRIYRGG…FAGMGFRCPE (274 aa)). An ATP-binding site is contributed by 175–182 (GPPSSGKT). Residues 493–706 (ELLKSNFQWQ…AQNAISVNEF (214 aa)) enclose the ABC transmembrane type-2 1 domain. The next 7 membrane-spanning stretches (helical) occupy residues 511–531 (FIYVFKFIQLLLVALITMTVF), 544–564 (GIIYLGALYFAIVMILFNGFT), 592–612 (LPSWLLSIPTSLIESGMWVLV), 630–650 (FLLLFFLHQTSLALFRVMASL), 655–675 (IVANTFGSFALLVVMILGGFI), 681–701 (IPAWWIWGYWISPMMYAQNAI), and 741–761 (IGVGALFGYAIVLNFLFTLFL). The region spanning 824-1076 (MCFKNINYYV…NLVEFFEAIP (253 aa)) is the ABC transporter 2 domain. 869-876 (GVSGAGKT) contributes to the ATP binding site. The ABC transmembrane type-2 2 domain occupies 1149–1363 (AQYAACLWKQ…TLYGLLTSQF (215 aa)). Transmembrane regions (helical) follow at residues 1168–1188 (YTAVRFFYTVIISLMFGTICW), 1200–1220 (IFNAMGAMYAAVLFIGITNAT), 1245–1265 (LPFAFSLVTVEFPYILVQSLI), 1283–1303 (FLWYLFFMYFTLLYFTFYGMM), 1313–1333 (VAPIIAAPFYTLWNLFCGFMI), 1341–1363 (WWRWYYWANPVSWTLYGLLTSQF), and 1398–1418 (VVAGMVAGFCVLFAVVFALAI).

The protein belongs to the ABC transporter superfamily. ABCG family. PDR (TC 3.A.1.205) subfamily.

The protein resides in the membrane. In terms of biological role, may be a general defense protein. The sequence is that of ABC transporter G family member 31 from Oryza sativa subsp. japonica (Rice).